The sequence spans 441 residues: Amino-acid acetyltransferase (441 aa).

An N-acetyltransferase domain is found at 295–434 (EQIRRANIND…QALYNYQRRS (140 aa)).

It belongs to the acetyltransferase family. ArgA subfamily. As to quaternary structure, homohexamer.

Its subcellular location is the cytoplasm. It catalyses the reaction L-glutamate + acetyl-CoA = N-acetyl-L-glutamate + CoA + H(+). It functions in the pathway amino-acid biosynthesis; L-arginine biosynthesis; N(2)-acetyl-L-ornithine from L-glutamate: step 1/4. The polypeptide is Amino-acid acetyltransferase (Edwardsiella ictaluri (strain 93-146)).